The sequence spans 495 residues: tRNA(Ile)-lysidine synthase (495 aa).

26–31 (SGGSDS) lines the ATP pocket.

This sequence belongs to the tRNA(Ile)-lysidine synthase family.

The protein localises to the cytoplasm. It carries out the reaction cytidine(34) in tRNA(Ile2) + L-lysine + ATP = lysidine(34) in tRNA(Ile2) + AMP + diphosphate + H(+). In terms of biological role, ligates lysine onto the cytidine present at position 34 of the AUA codon-specific tRNA(Ile) that contains the anticodon CAU, in an ATP-dependent manner. Cytidine is converted to lysidine, thus changing the amino acid specificity of the tRNA from methionine to isoleucine. The chain is tRNA(Ile)-lysidine synthase from Bartonella tribocorum (strain CIP 105476 / IBS 506).